The primary structure comprises 148 residues: Large ribosomal subunit protein uL13 (148 aa).

Composition is skewed to basic and acidic residues over residues 71–81 (GKKEKQKEYHE) and 89–99 (DHSHSPEEMRA). Disordered regions lie at residues 71-99 (GKKE…EMRA) and 125-148 (KKLK…LDNA).

It belongs to the universal ribosomal protein uL13 family. In terms of assembly, part of the 50S ribosomal subunit.

Functionally, this protein is one of the early assembly proteins of the 50S ribosomal subunit, although it is not seen to bind rRNA by itself. It is important during the early stages of 50S assembly. This chain is Large ribosomal subunit protein uL13, found in Salinibacter ruber (strain DSM 13855 / M31).